The following is a 731-amino-acid chain: Inclusion body clearance protein IML2 (731 aa).

The segment at 1–26 (MFRVFGSFGSKGNQSSGEEQSTKTKQ) is disordered. The span at 10–26 (SKGNQSSGEEQSTKTKQ) shows a compositional bias: polar residues. Ser265, Ser268, and Ser378 each carry phosphoserine. Thr380 bears the Phosphothreonine mark. 2 positions are modified to phosphoserine: Ser383 and Ser392.

Belongs to the IML2 family. As to quaternary structure, interacts with lipid droplet proteins PET10 and PDR16.

Its subcellular location is the cytoplasm. The protein localises to the nucleus. In terms of biological role, inclusion body (IB) resident protein that interacts strongly with lipid droplet (LD) proteins. Involved in LD-mediated IB clearing after protein folding stress, probably by enabling access to the IBs of an LD-stored soluble sterol derivative that acts as a chaperone in inclusion clearing. The chain is Inclusion body clearance protein IML2 from Saccharomyces cerevisiae (strain ATCC 204508 / S288c) (Baker's yeast).